Consider the following 213-residue polypeptide: Ras-related protein Rab-4B (213 aa).

Alanine 2 is modified (N-acetylalanine). Residues glycine 18, threonine 19, glycine 20, lysine 21, serine 22, and cysteine 23 each coordinate GDP. GTP-binding residues include glycine 18, threonine 19, glycine 20, lysine 21, serine 22, cysteine 23, serine 37, histidine 39, and threonine 40. Serine 22 lines the Mg(2+) pocket. A Switch 1 motif is present at residues histidine 39 to glutamate 44. Residues threonine 40 and aspartate 63 each contribute to the Mg(2+) site. Residues alanine 65–threonine 74 carry the Switch 2 motif. Glycine 66 is a binding site for GTP. Glutamine 67 is modified (5-glutamyl serotonin). Residues asparagine 121, lysine 122, aspartate 124, alanine 152, and leucine 153 each contribute to the GDP site. Residues asparagine 121, lysine 122, aspartate 124, alanine 152, and leucine 153 each coordinate GTP. Residues serine 185 and serine 193 each carry the phosphoserine modification. Residues cysteine 211 and cysteine 213 are each lipidated (S-geranylgeranyl cysteine). Cysteine 213 carries the cysteine methyl ester modification.

It belongs to the small GTPase superfamily. Rab family. Interacts (GTP-bound form) with RUFY1; the interaction allows endosomal tethering and fusion. Requires Mg(2+) as cofactor. Post-translationally, serotonylation of Gln-67 by TGM2 during activation and aggregation of platelets leads to constitutive activation of GTPase activity.

Its subcellular location is the cell membrane. The protein resides in the early endosome membrane. It catalyses the reaction GTP + H2O = GDP + phosphate + H(+). Regulated by guanine nucleotide exchange factors (GEFs) which promote the exchange of bound GDP for free GTP. Regulated by GTPase activating proteins (GAPs) which increase the GTP hydrolysis activity. Inhibited by GDP dissociation inhibitors (GDIs). In terms of biological role, the small GTPases Rab are key regulators of intracellular membrane trafficking, from the formation of transport vesicles to their fusion with membranes. Rabs cycle between an inactive GDP-bound form and an active GTP-bound form that is able to recruit to membranes different set of downstream effectors directly responsible for vesicle formation, movement, tethering and fusion. RAB4B mediates endosomal tethering and fusion through the interaction with RUFY1 and RAB14. Acts as a regulator of platelet alpha-granule release during activation and aggregation of platelets. The sequence is that of Ras-related protein Rab-4B from Mus musculus (Mouse).